Consider the following 797-residue polypeptide: Peroxisome proliferator-activated receptor gamma coactivator 1-alpha (797 aa).

Residue Lys-77 is modified to N6-acetyllysine. The interval 101 to 138 (EDGLPSFDALTDGAVTTDNEASPSSMPDGTPPPQEAEE) is disordered. Residues 114 to 127 (AVTTDNEASPSSMP) are compositionally biased toward polar residues. The LXXLL motif motif lies at 142–146 (LKKLL). Residue Lys-144 is modified to N6-acetyllysine. Position 177 is a phosphothreonine; by AMPK (Thr-177). At Lys-183 the chain carries N6-acetyllysine. The tract at residues 212–276 (YLTTNDDPPH…NDPKGSPFEN (65 aa)) is disordered. Residues 218-236 (DPPHTKPTENRNSSRDKCA) show a composition bias toward basic and acidic residues. Polar residues predominate over residues 243-259 (TQPQSQHAQAKPTTLSL). An N6-acetyllysine mark is found at Lys-253, Lys-270, Lys-277, Lys-320, Lys-346, Lys-412, Lys-441, and Lys-450. The tract at residues 289 to 376 (GTAGLTPPTT…HEERKTKRPS (88 aa)) is disordered. Residues 292 to 338 (GLTPPTTPPHKANQDNPFKASPKLKPSCKTVVPPPTKRARYSECSGT) form an interaction with PPARG region. Residues 349-797 (EQSELYAQLS…LKEAQRSLRR (449 aa)) form a mediates interaction with RNF34 region. At Ser-538 the chain carries Phosphoserine; by AMPK. Disordered regions lie at residues 543–598 (NSPC…SSRS), 612–634 (HRNS…PRYD), and 648–668 (EYRK…ERQK). Residues 562 to 577 (QRMRSRSRSFSRHRSC) show a composition bias toward basic residues. Over residues 578 to 598 (SRSPYSRSRSRSPGSRSSSRS) the composition is skewed to low complexity. Basic residues predominate over residues 621–630 (SRSRSPYSRR). The RRM domain maps to 676–752 (RVIYVGKIRP…TDFELYFCGR (77 aa)). Residues Lys-757 and Lys-778 each carry the N6-acetyllysine modification.

As to quaternary structure, homooligomer. Interacts with MYBBP1A; inhibits MYBBP1A transcriptional activation. Interacts with PRDM16, LPIN1 and PML. Interacts (via LXXLL motif) with RORA and RORC (via AF-2 motif); activates RORA and RORC transcriptional activation. Interacts with LRPPRC. Interacts with FOXO1. Interacts with NR5A2. Post-translationally, phosphorylation by AMPK in skeletal muscle increases activation of its own promoter. Phosphorylated by CLK2. Heavily acetylated by KAT2A/GCN5 under conditions of high nutrients, leading to inactivation of PPARGC1A. Deacetylated by SIRT1 in low nutrients/high NAD conditions, leading to its activation. In terms of processing, ubiquitinated. Ubiquitination by RNF34 induces proteasomal degradation. White quadriceps and red tibialis anterior (TA) muscles, liver, kidney and brown adipose tissue (at protein level). Skeletal muscle, brown adipose tissue, heart, kidney and brain.

Its subcellular location is the nucleus. It localises to the PML body. Its function is as follows. Transcriptional coactivator for steroid receptors and nuclear receptors. Greatly increases the transcriptional activity of PPARG and thyroid hormone receptor on the uncoupling protein promoter. Can regulate key mitochondrial genes that contribute to the program of adaptive thermogenesis. Plays an essential role in metabolic reprogramming in response to dietary availability through coordination of the expression of a wide array of genes involved in glucose and fatty acid metabolism. Acts as a key regulator of gluconeogenesis: stimulates hepatic gluconeogenesis by increasing the expression of gluconeogenic enzymes, and acting together with FOXO1 to promote the fasting gluconeogenic program. Induces the expression of PERM1 in the skeletal muscle in an ESRRA-dependent manner. Also involved in the integration of the circadian rhythms and energy metabolism. Required for oscillatory expression of clock genes, such as BMAL1 and NR1D1, through the coactivation of RORA and RORC, and metabolic genes, such as PDK4 and PEPCK. This chain is Peroxisome proliferator-activated receptor gamma coactivator 1-alpha (Ppargc1a), found in Mus musculus (Mouse).